A 169-amino-acid polypeptide reads, in one-letter code: Cell division inhibitor SulA (169 aa).

Residues 106–112 (ALRTGNY) are ftsZ binding. Residues 162-169 (KIHSNLYH) are lon protease binding.

This sequence belongs to the SulA family. Interacts with FtsZ. Is rapidly cleaved and degraded by the Lon protease once DNA damage is repaired.

In terms of biological role, component of the SOS system and an inhibitor of cell division. Accumulation of SulA causes rapid cessation of cell division and the appearance of long, non-septate filaments. In the presence of GTP, binds a polymerization-competent form of FtsZ in a 1:1 ratio, thus inhibiting FtsZ polymerization and therefore preventing it from participating in the assembly of the Z ring. This mechanism prevents the premature segregation of damaged DNA to daughter cells during cell division. This is Cell division inhibitor SulA from Shigella flexneri serotype 5b (strain 8401).